Here is a 595-residue protein sequence, read N- to C-terminus: Aspartate--tRNA(Asp/Asn) ligase (595 aa).

Glutamate 175 is an L-aspartate binding site. The segment at 199-202 (QQYK) is aspartate. Residues arginine 221 and histidine 454 each coordinate L-aspartate. ATP is bound at residue 221–223 (RDE). Glutamate 488 is an ATP binding site. Residue arginine 495 coordinates L-aspartate. Residue 540–543 (GIDR) participates in ATP binding.

This sequence belongs to the class-II aminoacyl-tRNA synthetase family. Type 1 subfamily. In terms of assembly, homodimer.

Its subcellular location is the cytoplasm. The enzyme catalyses tRNA(Asx) + L-aspartate + ATP = L-aspartyl-tRNA(Asx) + AMP + diphosphate. Aspartyl-tRNA synthetase with relaxed tRNA specificity since it is able to aspartylate not only its cognate tRNA(Asp) but also tRNA(Asn). Reaction proceeds in two steps: L-aspartate is first activated by ATP to form Asp-AMP and then transferred to the acceptor end of tRNA(Asp/Asn). This is Aspartate--tRNA(Asp/Asn) ligase from Rhizobium meliloti (strain 1021) (Ensifer meliloti).